The chain runs to 74 residues: NADH dehydrogenase [ubiquinone] 1 alpha subcomplex assembly factor 8 (74 aa).

In terms of domain architecture, CHCH spans 22–69; it reads LAACGAEAAAYGRCVQASTAPGGRLSKDFCAREFEALRSCFAAAAKKT. 2 consecutive short sequence motifs (cx9C motif) follow at residues 25 to 35 and 51 to 61; these read CGAEAAAYGRC and CAREFEALRSC. 2 disulfide bridges follow: cysteine 25-cysteine 61 and cysteine 35-cysteine 51.

Interacts with NDUFAF5.

The protein localises to the mitochondrion. Its function is as follows. Involved in the assembly of mitochondrial NADH:ubiquinone oxidoreductase complex (complex I, MT-ND1). Required to stabilize NDUFAF5. This chain is NADH dehydrogenase [ubiquinone] 1 alpha subcomplex assembly factor 8, found in Homo sapiens (Human).